A 996-amino-acid chain; its full sequence is PDZ domain-containing protein C23G3.12c (996 aa).

The disordered stretch occupies residues 1-35 (MSIKKRARAGSKSDDIGNKTPKKNGIEHEATKSSE). PDZ domains are found at residues 280–358 (SRLG…QRGS), 745–827 (EFRA…LREG), and 860–930 (RAVR…STFD). Positions 972 to 996 (KNPSMGFTIDEEVDDNTFDTEGEQQ) are disordered. Acidic residues predominate over residues 980-996 (IDEEVDDNTFDTEGEQQ).

Belongs to the peptidase S1C family.

This Schizosaccharomyces pombe (strain 972 / ATCC 24843) (Fission yeast) protein is PDZ domain-containing protein C23G3.12c.